The chain runs to 247 residues: uncharacterized protein (247 aa).

3 residues coordinate NADP(+): Leu11, Asn85, and Lys119. The Proton donor role is filled by Ser136. NADP(+) contacts are provided by Tyr150, Lys154, Val181, and Thr183. Catalysis depends on Tyr150, which acts as the Proton acceptor. Lys154 functions as the Lowers pKa of active site Tyr in the catalytic mechanism.

The protein belongs to the short-chain dehydrogenases/reductases (SDR) family.

This is an uncharacterized protein from Schizosaccharomyces pombe (strain 972 / ATCC 24843) (Fission yeast).